The sequence spans 323 residues: Leucine-rich repeat-containing protein 46 (323 aa).

LRR repeat units lie at residues Glu-49 to Arg-70, Asn-71 to Thr-92, Ser-93 to Gln-114, and Tyr-115 to Pro-135. The LRRCT domain maps to Asn-146 to Asp-188. Thr-178 bears the Phosphothreonine mark. Phosphoserine occurs at positions 179, 185, and 186. The stretch at Arg-203 to His-228 forms a coiled coil. Residues Met-249–Lys-323 form a disordered region. Positions Pro-267–Met-316 are enriched in low complexity. Residue Ser-303 is modified to Phosphoserine.

As to expression, testis-specific (at protein level).

Its subcellular location is the cell projection. It localises to the cilium. The protein localises to the flagellum. Required for normal spermatogenesis and male fertility. Plays an important role in sperm flagellum biogenesis. In Mus musculus (Mouse), this protein is Leucine-rich repeat-containing protein 46 (Lrrc46).